A 103-amino-acid chain; its full sequence is Small ribosomal subunit protein uS10 (103 aa).

The protein belongs to the universal ribosomal protein uS10 family. In terms of assembly, part of the 30S ribosomal subunit.

Involved in the binding of tRNA to the ribosomes. This chain is Small ribosomal subunit protein uS10, found in Azotobacter vinelandii (strain DJ / ATCC BAA-1303).